The primary structure comprises 668 residues: DNA ligase (668 aa).

NAD(+) is bound by residues Asp32–Asp36, Ser81–Leu82, and Glu110. Lys112 (N6-AMP-lysine intermediate) is an active-site residue. NAD(+) contacts are provided by Arg133, Glu167, Lys283, and Lys307. 4 residues coordinate Zn(2+): Cys401, Cys404, Cys419, and Cys424. The region spanning Gln586 to Lys668 is the BRCT domain.

This sequence belongs to the NAD-dependent DNA ligase family. LigA subfamily. It depends on Mg(2+) as a cofactor. The cofactor is Mn(2+).

The enzyme catalyses NAD(+) + (deoxyribonucleotide)n-3'-hydroxyl + 5'-phospho-(deoxyribonucleotide)m = (deoxyribonucleotide)n+m + AMP + beta-nicotinamide D-nucleotide.. In terms of biological role, DNA ligase that catalyzes the formation of phosphodiester linkages between 5'-phosphoryl and 3'-hydroxyl groups in double-stranded DNA using NAD as a coenzyme and as the energy source for the reaction. It is essential for DNA replication and repair of damaged DNA. This is DNA ligase from Staphylococcus carnosus (strain TM300).